Consider the following 784-residue polypeptide: MPRALWTAWVWAVIILSTEGASDQASSLSCDPTGVCDGHSRSLNSIPSGLTAGVKSLDLSNNDITYVGNRDLQRCVNLKTLRLGANEIHTVEEDSFFHLRNLEYLDLSYNRLSNLSSSWFRSLYVLKFLNLLGNLYKTLGETSLFSHLPNLRTLKVGNSNSFTEIHEKDFTGLTFLEELEISAQNLQIYVPKSLKSIQNISHLILHLKQPILLVDILVDIVSSLDCFELRDTNLHTFHFSEASISEMSTSVKKLIFRNVQFTDESFVEVVKLFNYVSGILEVEFDDCTHDGIGDFRALSLDRIRHLGNVETLTIRKLHIPQFFLFHDLSSIYPLTGRVKRVTIENSKVFLVPCLLSQHLKSLEYLDLSENLMSEETLKNSACKDAWPFLQTLVLRQNRLKSLEKTGELLLTLENLNNLDISKNNFLSMPETCQWPGKMKQLNLSSTRIHSLTQCLPQTLEILDVSNNNLDSFSLILPQLKELYISRNKLKTLPDASFLPVLSVMRISRNIINTFSKEQLDSFQQLKTLEAGGNNFICSCDFLSFTQGQQALGRVLVDWPDDYRCDSPSHVRGQRVQDARLSLSECHRAAVVSAACCALFLLLLLTGVLCHRFHGLWYMKMMWAWLQAKRKPRKAPRRDICYDAFVSYSERDSYWVENLMVQELEHFNPPFKLCLHKRDFIPGKWIIDNIIDSIEKSHKTIFVLSENFVKSEWCKYELDFSHFRLFDENNDAAILILLEPIDKKAIPQRFCKLRKIMNTKTYLEWPVDETQQEGFWLNLRAAIRS.

The signal sequence occupies residues Met-1–Gly-20. Topologically, residues Ala-21–Arg-587 are extracellular. Cys-30 and Cys-36 are oxidised to a cystine. LRR repeat units lie at residues Val-54–Asn-77, Leu-78–Asn-101, Leu-102–Val-125, Leu-126–Asn-150, Leu-151–Phe-175, Leu-176–Asn-199, Ile-200–Ser-223, Leu-224–Ser-250, Val-251–Gly-278, Ile-279–Asn-308, Val-309–Arg-337, Val-338–Ser-361, Leu-362–Phe-388, Leu-389–Asn-414, Leu-415–Lys-437, Met-438–Gln-457, Thr-458–Gln-478, Leu-479–Val-500, and Leu-501–Gln-524. The N-linked (GlcNAc...) asparagine glycan is linked to Asn-114. The N-linked (GlcNAc...) asparagine glycan is linked to Asn-199. Cysteines 353 and 382 form a disulfide. A disulfide bridge connects residues Cys-432 and Cys-454. Asn-442 carries an N-linked (GlcNAc...) asparagine glycan. The 55-residue stretch at Leu-525 to Arg-579 folds into the LRRCT domain. A helical membrane pass occupies residues Ala-588–Leu-608. At Cys-609–Ser-784 the chain is on the cytoplasmic side. The 144-residue stretch at Ile-639 to Ile-782 folds into the TIR domain. A Glycyl lysine isopeptide (Lys-Gly) (interchain with G-Cter in ubiquitin) cross-link involves residue Lys-754. The short motif at Tyr-761–Leu-778 is the ATG16L1-binding motif element.

The protein belongs to the Toll-like receptor family. As to quaternary structure, interacts with LY96, TLR1 and TLR6 (via extracellular domain). TLR2 seems to exist in heterodimers with either TLR1 or TLR6 before stimulation by the ligand. The heterodimers form bigger oligomers in response to their corresponding ligands as well as further heterotypic associations with other receptors such as CD14 and/or CD36. Binds MYD88 (via TIR domain). Interacts with TICAM1. Interacts with CNPY3. Interacts with ATG16L1. Interacts with PPP1R11. Interacts with TICAM2. Interacts with TIRAP. Post-translationally, ubiquitinated at Lys-754 by PPP1R11, leading to its degradation. Deubiquitinated by USP2. In terms of processing, glycosylation of Asn-442 is critical for secretion of the N-terminal ectodomain of TLR2.

It is found in the membrane. The protein resides in the cytoplasmic vesicle. The protein localises to the phagosome membrane. It localises to the membrane raft. Cooperates with LY96 to mediate the innate immune response to bacterial lipoproteins and other microbial cell wall components. Cooperates with TLR1 or TLR6 to mediate the innate immune response to bacterial lipoproteins or lipopeptides. Acts via MYD88 and TRAF6, leading to NF-kappa-B activation, cytokine secretion and the inflammatory response. May also promote apoptosis in response to lipoproteins. Forms activation clusters composed of several receptors depending on the ligand, these clusters trigger signaling from the cell surface and subsequently are targeted to the Golgi in a lipid-raft dependent pathway. Forms the cluster TLR2:TLR6:CD14:CD36 in response to diacylated lipopeptides and TLR2:TLR1:CD14 in response to triacylated lipopeptides. The polypeptide is Toll-like receptor 2 (TLR2) (Bos taurus (Bovine)).